We begin with the raw amino-acid sequence, 73 residues long: Probable minor pilin MMP0528 (73 aa).

Positions 1–10 (MLKKLYSKKG) are excised as a propeptide. A QXSXEXXXL motif is present at residues 11–19 (QVSMEMGIL).

Post-translationally, the N-terminus is probably cleaved by the prepilin peptidase EppA, which recognizes the class III signal sequence.

The protein localises to the secreted. Its subcellular location is the cell surface. It is found in the fimbrium. The chain is Probable minor pilin MMP0528 from Methanococcus maripaludis (strain DSM 14266 / JCM 13030 / NBRC 101832 / S2 / LL).